The primary structure comprises 102 residues: MPIAVGMIETLGFPAVVEAADAMVKAARVTLVGYEKIGSGRVTVIVRGDVSEVQASVSAGLDSAKRVAGGEVLSHHIIARPHENLEYVLPIRYTEAVEQFRM.

The 87-residue stretch at 4–90 (AVGMIETLGF…PHENLEYVLP (87 aa)) folds into the BMC domain.

The protein belongs to the bacterial microcompartments protein family. CcmK subfamily. As to quaternary structure, homohexamer. Interacts with CcmO in the carboxysome. Interacts with CcmN.

Its subcellular location is the carboxysome. In terms of biological role, one of the shell proteins of the carboxysome, a polyhedral inclusion where RuBisCO (ribulose bisphosphate carboxylase, rbcL-rbcS) is sequestered. Assembles into hexamers which make sheets that form the facets of the polyhedral carboxysome. The hexamer central pore probably regulates metabolite flux. Functionally, the major shell protein of the carboxysome, a polyhedral inclusion where RuBisCO (ribulose bisphosphate carboxylase, rbcL-rbcS) is sequestered. Hexamers make sheets that form the facets of the polyhedral carboxysome. The shell is 4.5 nm thick, as observed for CcmK hexamers. Required for recruitment of CcmO to the pre-carboxysome. In PCC 7942 there are several CcmK paralogs with presumably functional differences; replacing the central pore residues (34-37) with those of either CcmK4 from this organism (Tyr-Met-Arg-Ala) or from an alpha-type carboxysome forming cyanobacterium (CsoS1 of P.marinus strain MIT 9313, Arg-Glu-Phe-Val) allows the bacterium to make carboxysomes, but the expression level is too low to know if the carboxysome is functional for CO(2) fixation. Its function is as follows. Beta-carboxysome assembly initiates when soluble RuBisCO is condensed into a liquid matrix in a pre-carboxysome by the RbcS-like domains of probably both CcmM58 and CcmM35. CcmN interacts with the N-terminus of CcmM58, and then recruits the CcmK2 major shell protein via CcmN's encapsulation peptide. Shell formation requires CcmK proteins and CcmO. CcmL caps the otherwise elongated carboxysome. Once fully encapsulated carboxysomes are formed, they migrate within the cell probably via interactions with the cytoskeleton. In Synechococcus elongatus (strain ATCC 33912 / PCC 7942 / FACHB-805) (Anacystis nidulans R2), this protein is Carboxysome shell protein CcmK2.